Consider the following 294-residue polypeptide: Lipoyl synthase (294 aa).

[4Fe-4S] cluster-binding residues include Cys35, Cys40, Cys46, Cys61, Cys65, Cys68, and Ser273. The region spanning 47–262 (FRQRQATFLI…REQALSMGFE (216 aa)) is the Radical SAM core domain.

Belongs to the radical SAM superfamily. Lipoyl synthase family. [4Fe-4S] cluster is required as a cofactor.

It localises to the cytoplasm. It catalyses the reaction [[Fe-S] cluster scaffold protein carrying a second [4Fe-4S](2+) cluster] + N(6)-octanoyl-L-lysyl-[protein] + 2 oxidized [2Fe-2S]-[ferredoxin] + 2 S-adenosyl-L-methionine + 4 H(+) = [[Fe-S] cluster scaffold protein] + N(6)-[(R)-dihydrolipoyl]-L-lysyl-[protein] + 4 Fe(3+) + 2 hydrogen sulfide + 2 5'-deoxyadenosine + 2 L-methionine + 2 reduced [2Fe-2S]-[ferredoxin]. The protein operates within protein modification; protein lipoylation via endogenous pathway; protein N(6)-(lipoyl)lysine from octanoyl-[acyl-carrier-protein]: step 2/2. Catalyzes the radical-mediated insertion of two sulfur atoms into the C-6 and C-8 positions of the octanoyl moiety bound to the lipoyl domains of lipoate-dependent enzymes, thereby converting the octanoylated domains into lipoylated derivatives. The protein is Lipoyl synthase of Geotalea daltonii (strain DSM 22248 / JCM 15807 / FRC-32) (Geobacter daltonii).